The chain runs to 356 residues: DNA polymerase IV (356 aa).

Residues 6–187 (IIHIDMDYFF…LDIGDFPGVG (182 aa)) form the UmuC domain. Mg(2+)-binding residues include Asp-10 and Asp-105. Glu-106 is an active-site residue.

Belongs to the DNA polymerase type-Y family. As to quaternary structure, monomer. Mg(2+) is required as a cofactor.

It is found in the cytoplasm. It catalyses the reaction DNA(n) + a 2'-deoxyribonucleoside 5'-triphosphate = DNA(n+1) + diphosphate. Functionally, poorly processive, error-prone DNA polymerase involved in untargeted mutagenesis. Copies undamaged DNA at stalled replication forks, which arise in vivo from mismatched or misaligned primer ends. These misaligned primers can be extended by PolIV. Exhibits no 3'-5' exonuclease (proofreading) activity. May be involved in translesional synthesis, in conjunction with the beta clamp from PolIII. This Staphylococcus epidermidis (strain ATCC 35984 / DSM 28319 / BCRC 17069 / CCUG 31568 / BM 3577 / RP62A) protein is DNA polymerase IV.